The chain runs to 598 residues: MRNKICEELNNTDIGKLVNLCGWVDRRRDHGGVIFIDLRDHSGFLQITINPDDGADLFKQAETLRNETVIMVSGIINERPKDSINTNLSTGELELKVKDLQILNQIKNNLPFPVSIHDYENTKEELRLKYRYLDLRRGKLLENLKKRHKIIKVAREFLDNFGFTEVETPLLTKSTPEGARDFLVPARLSNGEFFALPQSPQLFKQLLMVGGLDKYYQIAKCFRDEDLRADRQPEFTQLDIEMSFISEEEIISFNESLIKKIWKEVLNINFNNAFPRMTWQAAMDNYGTDRPDTRYQMLLKDLGGVLGNIGFNIFTKAIKSGGYIKSITVKGGNSSISNVRIKPGGDIFKVAQDAGAGGLAFIRVKGDELETIGAIKNNLSEEHIADILKITEAKDGDLILLGAGDKQIVNQSLDRVRQYIAKELNLIDKSKWNFLWVTDFPMFERNEDENRYEALHHPFCSPKNIKSKDSENLKKEIESSTANAYDLVLNGLELGGGSLRIHEANLQRQVLKTVGLTDKEIDEKFGFLIEALEMGAPPHGGIAFGLDRITMLIIGADSIRETIAFPKNQQAKCLLTNAPSNVSESQLKELDIEITIDE.

An L-aspartate-binding site is contributed by Glu-177. An aspartate region spans residues 201-204 (QLFK). Arg-223 is a binding site for L-aspartate. Residues 223–225 (RDE) and Gln-232 contribute to the ATP site. Position 456 (His-456) interacts with L-aspartate. Residue Glu-493 participates in ATP binding. Arg-500 is a binding site for L-aspartate. 545 to 548 (GLDR) serves as a coordination point for ATP.

This sequence belongs to the class-II aminoacyl-tRNA synthetase family. Type 1 subfamily. Homodimer.

It is found in the cytoplasm. It catalyses the reaction tRNA(Asx) + L-aspartate + ATP = L-aspartyl-tRNA(Asx) + AMP + diphosphate. Its function is as follows. Aspartyl-tRNA synthetase with relaxed tRNA specificity since it is able to aspartylate not only its cognate tRNA(Asp) but also tRNA(Asn). Reaction proceeds in two steps: L-aspartate is first activated by ATP to form Asp-AMP and then transferred to the acceptor end of tRNA(Asp/Asn). This Prochlorococcus marinus (strain AS9601) protein is Aspartate--tRNA(Asp/Asn) ligase.